The sequence spans 64 residues: Cytochrome c oxidase subunit 9, mitochondrial (64 aa).

Over 1-15 the chain is Mitochondrial matrix; the sequence is MAATAVRPITGMLRR. Residues 16 to 36 form a helical membrane-spanning segment; the sequence is GLILDIGIALGVGFVMANGYW. The Mitochondrial intermembrane portion of the chain corresponds to 37–64; it reads YGYHMPRTNARDNYYKKLEEERAARMGA.

Belongs to the fungal cytochrome c oxidase subunit 7a family. Component of the cytochrome c oxidase (complex IV, CIV), a multisubunit enzyme composed of 11 subunits. The complex is composed of a catalytic core of 3 subunits Cox1, Cox2 and Cox3, encoded in the mitochondrial DNA, and 8 supernumerary subunits Cox4, Cox5a/Cox5, Cox6, Cox7, Cox8, Cox7a/Cox9, Cox6b/Cox12 and Cox6a/Cox13, which are encoded in the nuclear genome. The complex exists as a monomer or a dimer and forms respiratory supercomplexes (SCs) in the inner mitochondrial membrane with NADH-ubiquinone oxidoreductase (complex I, CI) and ubiquinol-cytochrome c oxidoreductase (cytochrome b-c1 complex, complex III, CIII), resulting in various different assemblies (supercomplexes I(1)IV(1), I(1)III(3)IV(2), III(2)IV(1) and III(2)IV(2) as well as larger supercomplexes of compositions like I(1)III(2)IV(5-6)).

The protein localises to the mitochondrion inner membrane. Its pathway is energy metabolism; oxidative phosphorylation. Its function is as follows. Component of the cytochrome c oxidase, the last enzyme in the mitochondrial electron transport chain which drives oxidative phosphorylation. The respiratory chain contains 3 multisubunit complexes succinate dehydrogenase (complex II, CII), ubiquinol-cytochrome c oxidoreductase (cytochrome b-c1 complex, complex III, CIII) and cytochrome c oxidase (complex IV, CIV), that cooperate to transfer electrons derived from NADH and succinate to molecular oxygen, creating an electrochemical gradient over the inner membrane that drives transmembrane transport and the ATP synthase. Cytochrome c oxidase is the component of the respiratory chain that catalyzes the reduction of oxygen to water. Electrons originating from reduced cytochrome c in the intermembrane space (IMS) are transferred via the dinuclear copper A center (CU(A)) of Cox2 and heme A of Cox1 to the active site in Cox1, a binuclear center (BNC) formed by heme A3 and copper B (CU(B)). The BNC reduces molecular oxygen to 2 water molecules using 4 electrons from cytochrome c in the IMS and 4 protons from the mitochondrial matrix. In Neurospora crassa (strain ATCC 24698 / 74-OR23-1A / CBS 708.71 / DSM 1257 / FGSC 987), this protein is Cytochrome c oxidase subunit 9, mitochondrial (cox-17).